Consider the following 470-residue polypeptide: FLYWCH transcription factor 2 (470 aa).

The tract at residues 102-148 (SQLISEDTRPSASSSPSSTATAVSNSGQSNATSTSSSSTEPEYKPRN) is disordered. A compositionally biased stretch (low complexity) spans 111-140 (PSASSSPSSTATAVSNSGQSNATSTSSSST). An FLYWCH-type zinc finger spans residues 145–204 (KPRNVREKVYADGYIMSFDKKSCCGTKEFWRCERKNDCNARMHSDINTREIVRKLHPHNH).

In terms of biological role, probable transcription factor. May bind to the promoters of target genes, including micro-RNA genes, in order to repress expression, and acting redundantly with flh-1 and flh-3. The chain is FLYWCH transcription factor 2 from Caenorhabditis elegans.